The following is a 370-amino-acid chain: Aminomethyltransferase (370 aa).

This sequence belongs to the GcvT family. As to quaternary structure, the glycine cleavage system is composed of four proteins: P, T, L and H.

The catalysed reaction is N(6)-[(R)-S(8)-aminomethyldihydrolipoyl]-L-lysyl-[protein] + (6S)-5,6,7,8-tetrahydrofolate = N(6)-[(R)-dihydrolipoyl]-L-lysyl-[protein] + (6R)-5,10-methylene-5,6,7,8-tetrahydrofolate + NH4(+). Functionally, the glycine cleavage system catalyzes the degradation of glycine. The sequence is that of Aminomethyltransferase from Clostridium botulinum (strain Kyoto / Type A2).